A 498-amino-acid polypeptide reads, in one-letter code: Transcription factor kayak (498 aa).

Over residues 108-127 (ASLGQGSESEDSNASYNDTQ) the composition is skewed to polar residues. 2 disordered regions span residues 108–144 (ASLG…HTDS) and 177–234 (GSAS…KRRV). 2 stretches are compositionally biased toward low complexity: residues 135-144 (TDTSSAHTDS) and 177-191 (GSAS…TSNT). The 64-residue stretch at 212–275 (EQKRAVRRER…KQLEYLLATH (64 aa)) folds into the bZIP domain. The basic motif stretch occupies residues 214–233 (KRAVRRERNKQAAARCRKRR). The leucine-zipper stretch occupies residues 240-247 (LTEEVEQL). Residues 304–325 (AGSSGSGASSHHNHNSNDSSNG) show a composition bias toward low complexity. 2 disordered regions span residues 304–345 (AGSS…SPLD) and 465–498 (TPVS…LVSL). Over residues 333-343 (TLNSTGRSNSP) the composition is skewed to polar residues. Serine 342 carries the phosphoserine modification.

The protein belongs to the bZIP family. Fos subfamily. As to quaternary structure, homodimer. Heterodimer with Jra. The kay-Jra heterodimer binds more stably to the AP-1 site than either of the two proteins alone.

It localises to the nucleus. In terms of biological role, developmentally regulated transcription factor AP-1 binds and recognizes the enhancer DNA sequence: 5'-TGA[CG]TCA-3'. May play a role in the function or determination of a particular subset of cells in the developing embryo. It is able to carry out its function either independently of or in conjunction with Jra. The sequence is that of Transcription factor kayak from Drosophila simulans (Fruit fly).